We begin with the raw amino-acid sequence, 694 residues long: MATPLKLYRNIGIAAHVDAGKTTTTERVLYYTGMSHKIGEVHDGAATMDWMVQEQERGITITSAATTCYWSGMDKQFESHRINIIDTPGHVDFMIEVERSLRVLDGAVVVFDSVAGVEPQSETVWRQANKYGVPRIVFVNKMDRMGANFLRVVSQIKQRLGSTPVVLQLPIGAEEEFKGVIDLIKMKAIQWDEENKGMTFKYVDIPADLKATCEEYRAHIIEAAAEYSEELMEKYLEGEEFTEAEIKKALRHLTITNKVVPVFCGSAFKNKGVQAVLDGVIEYLPSPTDIPDIQGVDEHGDEIHRKTSYDEPFSALAFKIATDPFVGTLTYFRAYSGILKSGDTVYNSVKGKKERIGRLLQMHANSREEIKEVRAGDIAAAVGLKTVTTGDTLCDQDKVVILERMDFPDPVIAVAVEPKTKADQEKMGIALGKLAQEDPSFRVHTDEESGQTIIQGMGELHLEIIVDRMKREFNVEANVGKPQVAYRETLKQAIEQEGKFVRQSGGRGQYGHVWLKIEPQEPGKGYEFINAIVGGVIPKEYIPAVDKGIQEQMQNGVIAGYPVVDVKVTLFDGSFHEVDSSEMAFKIAGSQCFKQGALKAKPVLLEPIMSVEVVTPEDYMGDVMGDLNRRRGLVQGMEDSPAGKIVRAEVPLAEMFGYSTDLRSATQGRATYTMEFCKYAEAPTNIAEAIIKKQ.

In terms of domain architecture, tr-type G spans 6-288 (KLYRNIGIAA…GVIEYLPSPT (283 aa)). Residues 15–22 (AHVDAGKT), 86–90 (DTPGH), and 140–143 (NKMD) contribute to the GTP site.

It belongs to the TRAFAC class translation factor GTPase superfamily. Classic translation factor GTPase family. EF-G/EF-2 subfamily.

It localises to the cytoplasm. In terms of biological role, catalyzes the GTP-dependent ribosomal translocation step during translation elongation. During this step, the ribosome changes from the pre-translocational (PRE) to the post-translocational (POST) state as the newly formed A-site-bound peptidyl-tRNA and P-site-bound deacylated tRNA move to the P and E sites, respectively. Catalyzes the coordinated movement of the two tRNA molecules, the mRNA and conformational changes in the ribosome. The sequence is that of Elongation factor G from Legionella pneumophila (strain Lens).